The sequence spans 119 residues: Basic phospholipase A2 notechis II-5 (119 aa).

Disulfide bonds link Cys-11–Cys-71, Cys-27–Cys-118, Cys-29–Cys-45, Cys-44–Cys-99, Cys-51–Cys-92, Cys-60–Cys-85, and Cys-78–Cys-90. Ca(2+) is bound by residues Tyr-28, Gly-30, and Gly-32. Residue His-48 is part of the active site. Asp-49 provides a ligand contact to Ca(2+). Asp-93 is an active-site residue.

This sequence belongs to the phospholipase A2 family. Group I subfamily. D49 sub-subfamily. Ca(2+) serves as cofactor. Expressed by the venom gland.

The protein resides in the secreted. It catalyses the reaction a 1,2-diacyl-sn-glycero-3-phosphocholine + H2O = a 1-acyl-sn-glycero-3-phosphocholine + a fatty acid + H(+). Functionally, snake venom phospholipase A2 (PLA2) that inhibits neuromuscular transmission by blocking acetylcholine release from the nerve termini. Notechis II-5 is less toxic than notexin but has a higher specific phospholipase activity. PLA2 catalyzes the calcium-dependent hydrolysis of the 2-acyl groups in 3-sn-phosphoglycerides. In Notechis scutatus scutatus (Mainland tiger snake), this protein is Basic phospholipase A2 notechis II-5.